The chain runs to 274 residues: 4-deoxy-L-threo-5-hexosulose-uronate ketol-isomerase (274 aa).

4 residues coordinate Zn(2+): His192, His194, Glu199, and His241.

This sequence belongs to the KduI family. Zn(2+) is required as a cofactor.

The enzyme catalyses 5-dehydro-4-deoxy-D-glucuronate = 3-deoxy-D-glycero-2,5-hexodiulosonate. It participates in glycan metabolism; pectin degradation; 2-dehydro-3-deoxy-D-gluconate from pectin: step 4/5. Its function is as follows. Catalyzes the isomerization of 5-dehydro-4-deoxy-D-glucuronate to 3-deoxy-D-glycero-2,5-hexodiulosonate. This Cereibacter sphaeroides (strain ATCC 17025 / ATH 2.4.3) (Rhodobacter sphaeroides) protein is 4-deoxy-L-threo-5-hexosulose-uronate ketol-isomerase.